The sequence spans 133 residues: ATP synthase epsilon chain, chloroplastic (133 aa).

It belongs to the ATPase epsilon chain family. As to quaternary structure, F-type ATPases have 2 components, CF(1) - the catalytic core - and CF(0) - the membrane proton channel. CF(1) has five subunits: alpha(3), beta(3), gamma(1), delta(1), epsilon(1). CF(0) has three main subunits: a, b and c.

Its subcellular location is the plastid. It localises to the chloroplast thylakoid membrane. In terms of biological role, produces ATP from ADP in the presence of a proton gradient across the membrane. The chain is ATP synthase epsilon chain, chloroplastic from Nicotiana sylvestris (Wood tobacco).